A 221-amino-acid chain; its full sequence is Orotidine 5'-phosphate decarboxylase (221 aa).

Substrate-binding positions include Asp-12, Lys-34, 60-69, Ser-117, 170-180, Gly-193, and Arg-194; these read DFKVADIPNT and PGVGAQGGKAS. Lys-62 acts as the Proton donor in catalysis.

It belongs to the OMP decarboxylase family. Type 1 subfamily. In terms of assembly, homodimer.

It carries out the reaction orotidine 5'-phosphate + H(+) = UMP + CO2. The protein operates within pyrimidine metabolism; UMP biosynthesis via de novo pathway; UMP from orotate: step 2/2. Its function is as follows. Catalyzes the decarboxylation of orotidine 5'-monophosphate (OMP) to uridine 5'-monophosphate (UMP). The protein is Orotidine 5'-phosphate decarboxylase of Methanosarcina barkeri (strain Fusaro / DSM 804).